A 199-amino-acid chain; its full sequence is Large ribosomal subunit protein uL5 (199 aa).

The protein belongs to the universal ribosomal protein uL5 family. As to quaternary structure, part of the 50S ribosomal subunit; part of the 5S rRNA/L5/L18/L25 subcomplex. Contacts the 5S rRNA and the P site tRNA. Forms a bridge to the 30S subunit in the 70S ribosome.

In terms of biological role, this is one of the proteins that bind and probably mediate the attachment of the 5S RNA into the large ribosomal subunit, where it forms part of the central protuberance. In the 70S ribosome it contacts protein S13 of the 30S subunit (bridge B1b), connecting the 2 subunits; this bridge is implicated in subunit movement. Contacts the P site tRNA; the 5S rRNA and some of its associated proteins might help stabilize positioning of ribosome-bound tRNAs. This is Large ribosomal subunit protein uL5 from Frankia casuarinae (strain DSM 45818 / CECT 9043 / HFP020203 / CcI3).